A 795-amino-acid polypeptide reads, in one-letter code: Phenylalanine--tRNA ligase beta subunit (795 aa).

Residues 39–148 (AGTFNGVKVG…IDAPIGMDFR (110 aa)) enclose the tRNA-binding domain. A B5 domain is found at 401 to 476 (PKPNKVALRR…RIYGYDNIPN (76 aa)). Mg(2+) contacts are provided by aspartate 454, aspartate 460, glutamate 463, and glutamate 464. An FDX-ACB domain is found at 701–794 (SKFPANRRDI…VSEKFGASLR (94 aa)).

The protein belongs to the phenylalanyl-tRNA synthetase beta subunit family. Type 1 subfamily. In terms of assembly, tetramer of two alpha and two beta subunits. Requires Mg(2+) as cofactor.

It is found in the cytoplasm. It carries out the reaction tRNA(Phe) + L-phenylalanine + ATP = L-phenylalanyl-tRNA(Phe) + AMP + diphosphate + H(+). This Vibrio vulnificus (strain CMCP6) protein is Phenylalanine--tRNA ligase beta subunit.